Here is a 948-residue protein sequence, read N- to C-terminus: Bifunctional glutamine synthetase adenylyltransferase/adenylyl-removing enzyme (948 aa).

An adenylyl removase region spans residues 1 to 445 (MAPPPDTSGS…IFTEVIAEPP (445 aa)). The interval 451 to 948 (EPLLDGGEAE…WKQIIEAPVF (498 aa)) is adenylyl transferase.

This sequence belongs to the GlnE family. It depends on Mg(2+) as a cofactor.

The catalysed reaction is [glutamine synthetase]-O(4)-(5'-adenylyl)-L-tyrosine + phosphate = [glutamine synthetase]-L-tyrosine + ADP. It carries out the reaction [glutamine synthetase]-L-tyrosine + ATP = [glutamine synthetase]-O(4)-(5'-adenylyl)-L-tyrosine + diphosphate. In terms of biological role, involved in the regulation of glutamine synthetase GlnA, a key enzyme in the process to assimilate ammonia. When cellular nitrogen levels are high, the C-terminal adenylyl transferase (AT) inactivates GlnA by covalent transfer of an adenylyl group from ATP to specific tyrosine residue of GlnA, thus reducing its activity. Conversely, when nitrogen levels are low, the N-terminal adenylyl removase (AR) activates GlnA by removing the adenylyl group by phosphorolysis, increasing its activity. The regulatory region of GlnE binds the signal transduction protein PII (GlnB) which indicates the nitrogen status of the cell. The polypeptide is Bifunctional glutamine synthetase adenylyltransferase/adenylyl-removing enzyme (Methylococcus capsulatus (strain ATCC 33009 / NCIMB 11132 / Bath)).